The primary structure comprises 875 residues: E3 SUMO-protein ligase SIZ1 (875 aa).

The region spanning 12–46 (LAYFRIKELKDILNQLGLPKQGKKQDLIDRVLALL) is the SAP domain. A PHD-type zinc finger spans residues 114–169 (KVRCICSSTMVNDSMIQCEDQRCQVWQHLNCVLIPDKPGESAEVPPVFYCELCRLS). An SP-RING-type zinc finger spans residues 349–430 (SDLEVVAESV…FNRITSLLRN (82 aa)). 4 residues coordinate Zn(2+): Cys380, His382, Cys403, and Cys406. The interval 796–820 (GGGGNEEPAPADVNSQPQIPSTETG) is disordered. Residues 808-819 (VNSQPQIPSTET) show a composition bias toward polar residues.

Belongs to the PIAS family.

It localises to the nucleus. The protein operates within protein modification; protein sumoylation. In terms of biological role, probable SUMO E3 ligase that may regulate Pi starvation responses. The protein is E3 SUMO-protein ligase SIZ1 (SIZ1) of Oryza sativa subsp. japonica (Rice).